The chain runs to 198 residues: Nucleoid occlusion factor SlmA (198 aa).

Residues 10–70 (NRREEILQSL…SLIEFIEDSL (61 aa)) enclose the HTH tetR-type domain. Positions 33-52 (TTAKLAASVGVSEAALYRHF) form a DNA-binding region, H-T-H motif. Residues 117 to 144 (EQDRLQGRINQLFERIEAQLRQVLREKR) are a coiled coil.

It belongs to the nucleoid occlusion factor SlmA family. As to quaternary structure, homodimer. Interacts with FtsZ.

It is found in the cytoplasm. The protein localises to the nucleoid. Its function is as follows. Required for nucleoid occlusion (NO) phenomenon, which prevents Z-ring formation and cell division over the nucleoid. Acts as a DNA-associated cell division inhibitor that binds simultaneously chromosomal DNA and FtsZ, and disrupts the assembly of FtsZ polymers. SlmA-DNA-binding sequences (SBS) are dispersed on non-Ter regions of the chromosome, preventing FtsZ polymerization at these regions. This Salmonella paratyphi A (strain ATCC 9150 / SARB42) protein is Nucleoid occlusion factor SlmA.